We begin with the raw amino-acid sequence, 186 residues long: Trafficking protein particle complex subunit 5 (186 aa).

This sequence belongs to the TRAPP small subunits family. BET3 subfamily. In terms of assembly, part of the multisubunit TRAPP (transport protein particle) complex.

It localises to the golgi apparatus. The protein resides in the cis-Golgi network. Its subcellular location is the endoplasmic reticulum. May play a role in vesicular transport from endoplasmic reticulum to Golgi. The protein is Trafficking protein particle complex subunit 5 (trappc5) of Dictyostelium discoideum (Social amoeba).